Consider the following 455-residue polypeptide: Phosphoglucosamine mutase (455 aa).

Residue S102 is the Phosphoserine intermediate of the active site. Mg(2+)-binding residues include S102, D241, D243, and D245. The residue at position 102 (S102) is a Phosphoserine.

This sequence belongs to the phosphohexose mutase family. The cofactor is Mg(2+). Activated by phosphorylation.

It catalyses the reaction alpha-D-glucosamine 1-phosphate = D-glucosamine 6-phosphate. In terms of biological role, catalyzes the conversion of glucosamine-6-phosphate to glucosamine-1-phosphate. This chain is Phosphoglucosamine mutase, found in Legionella pneumophila (strain Corby).